The sequence spans 950 residues: Kinase suppressor of Ras 2 (950 aa).

The disordered stretch occupies residues 239–296 (PPLESGHRSLPPSPRQRHAVRTPPRTPNIVTTVTPPGTPPMRKKNKLKPPGTPPPSSR). Over residues 259 to 273 (RTPPRTPNIVTTVTP) the composition is skewed to low complexity. A phosphothreonine mark is found at Thr-272 and Thr-276. The Phorbol-ester/DAG-type zinc finger occupies 412–456 (KHRFSTKYWMSQTCTVCGKGMLFGLKCKNCKLKCHNKCTKEAPPC). Residues His-413, Cys-425, Cys-428, Cys-438, Cys-441, His-446, Cys-449, and Cys-456 each coordinate Zn(2+). Ser-474 bears the Phosphoserine; by MARK3 mark. Thr-497 is modified (phosphothreonine). The segment at 498-556 (LPKTNKINKDHIPVPYQPDSSSNPSSTTSSTPSSPAPPLPPSATPPSPLHPSPQCTRQQ) is disordered. Residues 517–530 (SSSNPSSTTSSTPS) show a composition bias toward low complexity. The span at 531–548 (SPAPPLPPSATPPSPLHP) shows a compositional bias: pro residues. A Protein kinase domain is found at 666–931 (LEIGELIGKG…TKLMDMLEKL (266 aa)). 672 to 680 (IGKGRFGQV) contacts ATP. Asp-786 acts as the Proton donor/acceptor in catalysis. Lys-788 and Asp-803 together coordinate ATP.

This sequence belongs to the protein kinase superfamily. TKL Ser/Thr protein kinase family. Heterodimerizes (via N-terminus) with BRAF (via N-terminus) in a MAP2K1/MEK1-dependent manner. Interacts with BRAF; this increases the low intrinsic protein kinase activity of KSR2. Interacts with MAP2K1, forming a heterodimer that can dimerize to form a heterotetramer. Interacts with MAP3K8, MAPK, RAS and RAF. In terms of processing, phosphorylated on Ser-474 by MARK3. As to expression, mainly expressed in brain and kidney.

The protein localises to the cytoplasm. The protein resides in the membrane. The catalysed reaction is L-seryl-[protein] + ATP = O-phospho-L-seryl-[protein] + ADP + H(+). The enzyme catalyses L-threonyl-[protein] + ATP = O-phospho-L-threonyl-[protein] + ADP + H(+). With respect to regulation, kinase activity is inhibited by ASC24. Functionally, location-regulated scaffold connecting MEK to RAF. Has very low protein kinase activity and can phosphorylate MAP2K1 at several Ser and Thr residues with very low efficiency (in vitro). Acts as MAP2K1/MEK1-dependent allosteric activator of BRAF; upon binding to MAP2K1/MEK1, dimerizes with BRAF and promotes BRAF-mediated phosphorylation of MAP2K1/MEK1. Interaction with BRAF enhances KSR2-mediated phosphorylation of MAP2K1 (in vitro). Blocks MAP3K8 kinase activity and MAP3K8-mediated signaling. Acts as a negative regulator of MAP3K3-mediated activation of ERK, JNK and NF-kappa-B pathways, inhibiting MAP3K3-mediated interleukin-8 production. The polypeptide is Kinase suppressor of Ras 2 (Homo sapiens (Human)).